The sequence spans 314 residues: Methionyl-tRNA formyltransferase (314 aa).

A (6S)-5,6,7,8-tetrahydrofolate-binding site is contributed by 113 to 116; the sequence is SLLP.

It belongs to the Fmt family.

It catalyses the reaction L-methionyl-tRNA(fMet) + (6R)-10-formyltetrahydrofolate = N-formyl-L-methionyl-tRNA(fMet) + (6S)-5,6,7,8-tetrahydrofolate + H(+). Attaches a formyl group to the free amino group of methionyl-tRNA(fMet). The formyl group appears to play a dual role in the initiator identity of N-formylmethionyl-tRNA by promoting its recognition by IF2 and preventing the misappropriation of this tRNA by the elongation apparatus. In Serratia proteamaculans (strain 568), this protein is Methionyl-tRNA formyltransferase.